Reading from the N-terminus, the 297-residue chain is AKT-interacting protein (297 aa).

The segment covering 1 to 13 (MNLNPFWSMSTNT) has biased composition (polar residues). The interval 1–45 (MNLNPFWSMSTNTGRKRSDGEEQSGEQQQQQRASPARPSFGKKQL) is disordered. The segment covering 25–39 (GEQQQQQRASPARPS) has biased composition (low complexity). The UBC core domain maps to 79–227 (YLEYSLLAEF…VVDSVKLCNS (149 aa)). Residues 262–297 (KRRPEDHHKGLQVSGLSWVKPGSTQPFSKDDNPPQN) form a disordered region.

Belongs to the ubiquitin-conjugating enzyme family. FTS subfamily.

It localises to the cytoplasm. The protein localises to the cell membrane. Its function is as follows. May function to promote vesicle trafficking and/or fusion. May also regulate apoptosis. The sequence is that of AKT-interacting protein (aktip) from Salmo salar (Atlantic salmon).